Reading from the N-terminus, the 718-residue chain is Ribonuclease J (718 aa).

The interval 1–130 is disordered; it reads MNDSRNRGRK…RGNRGGGRRN (130 aa). Composition is skewed to low complexity over residues 55-91 and 100-118; these read AAQG…NNNR and SGNA…NRQG. Positions 220, 222, 224, 225, 287, and 309 each coordinate Zn(2+). 510-514 contacts substrate; the sequence is HTSGH. H536 lines the Zn(2+) pocket.

This sequence belongs to the metallo-beta-lactamase superfamily. RNA-metabolizing metallo-beta-lactamase-like family. Bacterial RNase J subfamily. In terms of assembly, homodimer, may be a subunit of the RNA degradosome. The cofactor is Zn(2+).

It localises to the cytoplasm. Functionally, an RNase that has 5'-3' exonuclease and possibly endoonuclease activity. Involved in maturation of rRNA and in some organisms also mRNA maturation and/or decay. In Corynebacterium glutamicum (strain ATCC 13032 / DSM 20300 / JCM 1318 / BCRC 11384 / CCUG 27702 / LMG 3730 / NBRC 12168 / NCIMB 10025 / NRRL B-2784 / 534), this protein is Ribonuclease J.